Here is a 160-residue protein sequence, read N- to C-terminus: Arginine repressor (160 aa).

This sequence belongs to the ArgR family.

The protein localises to the cytoplasm. Its pathway is amino-acid biosynthesis; L-arginine biosynthesis [regulation]. Its function is as follows. Regulates arginine biosynthesis genes. The sequence is that of Arginine repressor from Anaeromyxobacter sp. (strain K).